The primary structure comprises 215 residues: Large ribosomal subunit protein uL3 (215 aa).

The interval 136–155 (GVSISHRSHGSTGQRQDPGK) is disordered. The residue at position 151 (Q151) is an N5-methylglutamine.

It belongs to the universal ribosomal protein uL3 family. Part of the 50S ribosomal subunit. Forms a cluster with proteins L14 and L19. Methylated by PrmB.

In terms of biological role, one of the primary rRNA binding proteins, it binds directly near the 3'-end of the 23S rRNA, where it nucleates assembly of the 50S subunit. This Rickettsia canadensis (strain McKiel) protein is Large ribosomal subunit protein uL3.